The sequence spans 478 residues: Growth/differentiation factor 10 (478 aa).

Residues 1–33 form the signal peptide; sequence MAHVPARTSPGPGPQLLLLLLPLFLLLLRDVAG. Residues 34–368 constitute a propeptide that is removed on maturation; it reads SHRAPAWSAL…EKTMQKARRK (335 aa). Asn118, Asn156, and Asn281 each carry an N-linked (GlcNAc...) asparagine glycan. A disordered region spans residues 266–319; sequence YDPFPAGDPEPRAAPNNSADPRVRRAAQATGPLQDNELPGLDERPPRAHAQHFH. 3 disulfides stabilise this stretch: Cys376/Cys443, Cys405/Cys475, and Cys409/Cys477. The N-linked (GlcNAc...) asparagine glycan is linked to Asn469.

It belongs to the TGF-beta family. As to quaternary structure, homodimer or heterodimer. Can form a non-covalent complex of the mature region and the pro-region. Expressed in femur, brain, lung, skeletal muscle, pancreas and testis.

It is found in the secreted. In terms of biological role, growth factor involved in osteogenesis and adipogenesis. Plays an inhibitory role in the process of osteoblast differentiation via SMAD2/3 pathway. Plays an inhibitory role in the process of adipogenesis. The polypeptide is Growth/differentiation factor 10 (Homo sapiens (Human)).